The sequence spans 373 residues: Packaging protein 3 (373 aa).

The segment at 1–32 (MHPVLRQMRPQPRATTASAAVALSGSGEQEEP) is disordered. The segment at 1-150 (MHPVLRQMRP…VTEERNFQKS (150 aa)) is interaction with packaging protein 1. A phosphoserine; by host mark is found at Ser-52 and Ser-334.

This sequence belongs to the adenoviridae packaging protein 3 family. As to quaternary structure, part of the genome packaging complex composed of packaging proteins 1, 2 and 3; this complex specifically binds to the packaging sequence on the left end of viral genomic DNA and performs packaging of the viral genome. Interacts with hexon-linking protein IIIa; this interaction is required to promote correct genome packaging. Post-translationally, cleaved at different sites by the viral protease during virion maturation.

The protein localises to the host nucleus. Involved in viral genome packaging through its interaction with packaging proteins 1 and 2. After proteolytic cleavage by adenovirus protease, L1 52/55k protein is removed from the capsid during viral maturation. The chain is Packaging protein 3 from Homo sapiens (Human).